The chain runs to 341 residues: Probable 2' cyclic ADP-D-ribose synthase TcpO (341 aa).

One can recognise a TIR domain in the interval 204-336 (KEYDIFVSHS…EIIHEILERI (133 aa)). NAD(+) contacts are provided by residues 213–214 (SS) and Lys-243. Glu-279 is a catalytic residue.

The enzyme catalyses NAD(+) + H2O = ADP-D-ribose + nicotinamide + H(+). The catalysed reaction is NAD(+) = 2'cADPR + nicotinamide + H(+). Its function is as follows. NAD(+) hydrolase (NADase) that catalyzes cleavage of NAD(+) into ADP-D-ribose (ADPR) and nicotinamide. In addition to ADPR, also generates a cyclization variant of cyclic ADPR (cADPR), termed v-cADPR (probably 2'cADPR). The protein is Probable 2' cyclic ADP-D-ribose synthase TcpO of Methanobrevibacter olleyae.